The following is a 227-amino-acid chain: UPF0173 metal-dependent hydrolase BCE33L4354 (227 aa).

The protein belongs to the UPF0173 family.

This chain is UPF0173 metal-dependent hydrolase BCE33L4354, found in Bacillus cereus (strain ZK / E33L).